A 581-amino-acid polypeptide reads, in one-letter code: Arginine--tRNA ligase (581 aa).

The 'HIGH' region signature appears at Pro126 to His136.

The protein belongs to the class-I aminoacyl-tRNA synthetase family. In terms of assembly, monomer.

The protein resides in the cytoplasm. The catalysed reaction is tRNA(Arg) + L-arginine + ATP = L-arginyl-tRNA(Arg) + AMP + diphosphate. This is Arginine--tRNA ligase from Shewanella baltica (strain OS223).